A 162-amino-acid polypeptide reads, in one-letter code: Xylulose kinase (162 aa).

The interval 16 to 39 is disordered; that stretch reads GGHSATPRPATGPAGPAAHSGRHQ. A compositionally biased stretch (low complexity) spans 20-33; that stretch reads ATPRPATGPAGPAA.

It belongs to the FGGY kinase family.

It carries out the reaction D-xylulose + ATP = D-xylulose 5-phosphate + ADP + H(+). Functionally, catalyzes the phosphorylation of D-xylulose to D-xylulose 5-phosphate. The sequence is that of Xylulose kinase from Actinoplanes sp. (strain ATCC 31351 / 3876) (Ampullariella sp.).